A 175-amino-acid polypeptide reads, in one-letter code: Large ribosomal subunit protein uL10 (175 aa).

Belongs to the universal ribosomal protein uL10 family. In terms of assembly, part of the ribosomal stalk of the 50S ribosomal subunit. The N-terminus interacts with L11 and the large rRNA to form the base of the stalk. The C-terminus forms an elongated spine to which L12 dimers bind in a sequential fashion forming a multimeric L10(L12)X complex.

Its function is as follows. Forms part of the ribosomal stalk, playing a central role in the interaction of the ribosome with GTP-bound translation factors. The protein is Large ribosomal subunit protein uL10 of Prochlorococcus marinus (strain AS9601).